Consider the following 273-residue polypeptide: Transmembrane protein 202 (273 aa).

Transmembrane regions (helical) follow at residues 53 to 75 (HIYI…IAMS), 121 to 141 (FFLI…SSWI), 155 to 175 (VSML…LFVA), and 189 to 209 (LLWT…AGII). The tract at residues 242-273 (TTVSPAKDEGPRSEMESLSVREKNLPKSGLWW) is disordered. The segment covering 247-266 (AKDEGPRSEMESLSVREKNL) has biased composition (basic and acidic residues).

The protein localises to the membrane. This Homo sapiens (Human) protein is Transmembrane protein 202 (TMEM202).